Here is a 236-residue protein sequence, read N- to C-terminus: Biosynthetic peptidoglycan transglycosylase (236 aa).

The chain crosses the membrane as a helical span at residues isoleucine 17–glycine 37.

Belongs to the glycosyltransferase 51 family.

Its subcellular location is the cell inner membrane. The catalysed reaction is [GlcNAc-(1-&gt;4)-Mur2Ac(oyl-L-Ala-gamma-D-Glu-L-Lys-D-Ala-D-Ala)](n)-di-trans,octa-cis-undecaprenyl diphosphate + beta-D-GlcNAc-(1-&gt;4)-Mur2Ac(oyl-L-Ala-gamma-D-Glu-L-Lys-D-Ala-D-Ala)-di-trans,octa-cis-undecaprenyl diphosphate = [GlcNAc-(1-&gt;4)-Mur2Ac(oyl-L-Ala-gamma-D-Glu-L-Lys-D-Ala-D-Ala)](n+1)-di-trans,octa-cis-undecaprenyl diphosphate + di-trans,octa-cis-undecaprenyl diphosphate + H(+). The protein operates within cell wall biogenesis; peptidoglycan biosynthesis. Functionally, peptidoglycan polymerase that catalyzes glycan chain elongation from lipid-linked precursors. In Rhodopseudomonas palustris (strain ATCC BAA-98 / CGA009), this protein is Biosynthetic peptidoglycan transglycosylase.